Reading from the N-terminus, the 55-residue chain is Large ribosomal subunit protein bL33 (55 aa).

This sequence belongs to the bacterial ribosomal protein bL33 family.

This is Large ribosomal subunit protein bL33 from Edwardsiella ictaluri (strain 93-146).